The sequence spans 504 residues: Bifunctional purine biosynthesis protein PurH (504 aa).

An MGS-like domain is found at 1–144; the sequence is MRKRALISVY…KSFKNVVVIS (144 aa).

Belongs to the PurH family.

The enzyme catalyses (6R)-10-formyltetrahydrofolate + 5-amino-1-(5-phospho-beta-D-ribosyl)imidazole-4-carboxamide = 5-formamido-1-(5-phospho-D-ribosyl)imidazole-4-carboxamide + (6S)-5,6,7,8-tetrahydrofolate. It catalyses the reaction IMP + H2O = 5-formamido-1-(5-phospho-D-ribosyl)imidazole-4-carboxamide. It participates in purine metabolism; IMP biosynthesis via de novo pathway; 5-formamido-1-(5-phospho-D-ribosyl)imidazole-4-carboxamide from 5-amino-1-(5-phospho-D-ribosyl)imidazole-4-carboxamide (10-formyl THF route): step 1/1. It functions in the pathway purine metabolism; IMP biosynthesis via de novo pathway; IMP from 5-formamido-1-(5-phospho-D-ribosyl)imidazole-4-carboxamide: step 1/1. This chain is Bifunctional purine biosynthesis protein PurH, found in Fusobacterium nucleatum subsp. nucleatum (strain ATCC 25586 / DSM 15643 / BCRC 10681 / CIP 101130 / JCM 8532 / KCTC 2640 / LMG 13131 / VPI 4355).